A 284-amino-acid chain; its full sequence is MEMO1 family protein MmarC5_0191 (284 aa).

This sequence belongs to the MEMO1 family.

In Methanococcus maripaludis (strain C5 / ATCC BAA-1333), this protein is MEMO1 family protein MmarC5_0191.